A 239-amino-acid polypeptide reads, in one-letter code: 7-cyano-7-deazaguanine synthase (239 aa).

13–23 (LSGGLDSMVTA) serves as a coordination point for ATP. 4 residues coordinate Zn(2+): C193, C203, C206, and C209.

The protein belongs to the QueC family. It depends on Zn(2+) as a cofactor.

The enzyme catalyses 7-carboxy-7-deazaguanine + NH4(+) + ATP = 7-cyano-7-deazaguanine + ADP + phosphate + H2O + H(+). Its pathway is purine metabolism; 7-cyano-7-deazaguanine biosynthesis. In terms of biological role, catalyzes the ATP-dependent conversion of 7-carboxy-7-deazaguanine (CDG) to 7-cyano-7-deazaguanine (preQ(0)). This chain is 7-cyano-7-deazaguanine synthase, found in Erythrobacter litoralis (strain HTCC2594).